The following is a 289-amino-acid chain: Agamous-like MADS-box protein AGL93 (289 aa).

The MADS-box domain maps to Q18 to D78. Residues E151–T197 are disordered. Residues G187–T197 show a composition bias toward polar residues.

Expressed in pollen.

The protein resides in the nucleus. Its function is as follows. Probable transcription factor. This is Agamous-like MADS-box protein AGL93 from Arabidopsis thaliana (Mouse-ear cress).